Consider the following 1106-residue polypeptide: Exportin-T (1106 aa).

The tract at residues 336–357 is disordered; it reads TPLESRTRTGPSAQNGQSDTSD. Over residues 343–357 the composition is skewed to polar residues; the sequence is RTGPSAQNGQSDTSD.

It belongs to the exportin family.

The protein resides in the nucleus. The protein localises to the cytoplasm. In terms of biological role, tRNA nucleus export receptor which facilitates tRNA translocation across the nuclear pore complex. Involved in pre-tRNA splicing, probably by affecting the interaction of pre-tRNA with splicing endonuclease. In Mycosarcoma maydis (Corn smut fungus), this protein is Exportin-T (LOS1).